The sequence spans 383 residues: Heme chaperone HemW (383 aa).

One can recognise a Radical SAM core domain in the interval 1–241 (MPKLPPLSLY…LTMAGYQQYE (241 aa)). Y10 contacts S-adenosyl-L-methionine. Positions 16, 20, and 23 each coordinate [4Fe-4S] cluster. Residues G70, 71 to 72 (GT), E103, Q130, R142, and D167 contribute to the S-adenosyl-L-methionine site.

Belongs to the anaerobic coproporphyrinogen-III oxidase family. HemW subfamily. [4Fe-4S] cluster is required as a cofactor.

It is found in the cytoplasm. Its function is as follows. Probably acts as a heme chaperone, transferring heme to an unknown acceptor. Binds one molecule of heme per monomer, possibly covalently. Binds 1 [4Fe-4S] cluster. The cluster is coordinated with 3 cysteines and an exchangeable S-adenosyl-L-methionine. In Haemophilus influenzae (strain ATCC 51907 / DSM 11121 / KW20 / Rd), this protein is Heme chaperone HemW.